Consider the following 538-residue polypeptide: BTB/POZ domain-containing protein 6 (538 aa).

Residues 1-17 form the signal peptide; sequence MLLPLACLHGRVAQCLT. Disordered stretches follow at residues 29 to 53 and 76 to 115; these read PRRG…PPAK and AAVG…SPGW. Residues 35–53 are compositionally biased toward low complexity; that stretch reads ARGAASTGAEAAPAAPPAK. Residues 85 to 103 show a composition bias toward pro residues; it reads RSPPSAPAPAPPPPAPAPP. The BTB domain maps to 136 to 206; it reads ADVHFVVGPP…MYSDEIDLEA (71 aa).

Expressed in lens.

Its subcellular location is the cytoplasm. In terms of biological role, adapter protein for the cul3 E3 ubiquitin-protein ligase complex. Involved in late neuronal development and muscle formation. This is BTB/POZ domain-containing protein 6 from Homo sapiens (Human).